The following is a 284-amino-acid chain: GPN-loop GTPase 3 (284 aa).

GTP is bound at residue 13–18 (GSGKST). A Gly-Pro-Asn (GPN)-loop; involved in dimer interface motif is present at residues 72-74 (GPN). 174 to 177 (TKMD) serves as a coordination point for GTP.

The protein belongs to the GPN-loop GTPase family. As to quaternary structure, heterodimer with GPN1. Binds to RNA polymerase II (RNAPII). Interacts directly with subunits RPB4 and RPB7 and the CTD of RPB1.

Its function is as follows. Small GTPase required for proper localization of RNA polymerase II (RNAPII). May act at an RNAP assembly step prior to nuclear import. This Homo sapiens (Human) protein is GPN-loop GTPase 3.